A 279-amino-acid polypeptide reads, in one-letter code: Pantothenate synthetase (279 aa).

Residue Met31 to His38 participates in ATP binding. His38 (proton donor) is an active-site residue. Gln62 contacts (R)-pantoate. Gln62 contacts beta-alanine. An ATP-binding site is contributed by Gly148–Asp151. Gln154 contributes to the (R)-pantoate binding site. ATP contacts are provided by residues Val177 and Leu185–Arg188.

The protein belongs to the pantothenate synthetase family. As to quaternary structure, homodimer.

The protein localises to the cytoplasm. It carries out the reaction (R)-pantoate + beta-alanine + ATP = (R)-pantothenate + AMP + diphosphate + H(+). The protein operates within cofactor biosynthesis; (R)-pantothenate biosynthesis; (R)-pantothenate from (R)-pantoate and beta-alanine: step 1/1. Functionally, catalyzes the condensation of pantoate with beta-alanine in an ATP-dependent reaction via a pantoyl-adenylate intermediate. The chain is Pantothenate synthetase from Cereibacter sphaeroides (strain ATCC 17029 / ATH 2.4.9) (Rhodobacter sphaeroides).